Consider the following 156-residue polypeptide: Small ribosomal subunit protein uS7 (156 aa).

It belongs to the universal ribosomal protein uS7 family. Part of the 30S ribosomal subunit. Contacts proteins S9 and S11.

One of the primary rRNA binding proteins, it binds directly to 16S rRNA where it nucleates assembly of the head domain of the 30S subunit. Is located at the subunit interface close to the decoding center, probably blocks exit of the E-site tRNA. The chain is Small ribosomal subunit protein uS7 from Allorhizobium ampelinum (strain ATCC BAA-846 / DSM 112012 / S4) (Agrobacterium vitis (strain S4)).